The chain runs to 468 residues: Phosphoglucosamine mutase (468 aa).

Ser-112 (phosphoserine intermediate) is an active-site residue. Residues Ser-112, Asp-254, Asp-256, and Asp-258 each coordinate Mg(2+). The residue at position 112 (Ser-112) is a Phosphoserine.

This sequence belongs to the phosphohexose mutase family. Mg(2+) is required as a cofactor. In terms of processing, activated by phosphorylation.

The catalysed reaction is alpha-D-glucosamine 1-phosphate = D-glucosamine 6-phosphate. Functionally, catalyzes the conversion of glucosamine-6-phosphate to glucosamine-1-phosphate. This is Phosphoglucosamine mutase from Prochlorococcus marinus (strain MIT 9303).